A 367-amino-acid polypeptide reads, in one-letter code: Anhydro-N-acetylmuramic acid kinase (367 aa).

Residue 13–20 participates in ATP binding; the sequence is GTSMDGAD.

Belongs to the anhydro-N-acetylmuramic acid kinase family.

The enzyme catalyses 1,6-anhydro-N-acetyl-beta-muramate + ATP + H2O = N-acetyl-D-muramate 6-phosphate + ADP + H(+). The protein operates within amino-sugar metabolism; 1,6-anhydro-N-acetylmuramate degradation. Its pathway is cell wall biogenesis; peptidoglycan recycling. Catalyzes the specific phosphorylation of 1,6-anhydro-N-acetylmuramic acid (anhMurNAc) with the simultaneous cleavage of the 1,6-anhydro ring, generating MurNAc-6-P. Is required for the utilization of anhMurNAc either imported from the medium or derived from its own cell wall murein, and thus plays a role in cell wall recycling. This is Anhydro-N-acetylmuramic acid kinase from Neisseria meningitidis serogroup C / serotype 2a (strain ATCC 700532 / DSM 15464 / FAM18).